The primary structure comprises 145 residues: UPF0179 protein TV1250 (145 aa).

The protein belongs to the UPF0179 family.

The polypeptide is UPF0179 protein TV1250 (Thermoplasma volcanium (strain ATCC 51530 / DSM 4299 / JCM 9571 / NBRC 15438 / GSS1)).